We begin with the raw amino-acid sequence, 550 residues long: Metal transporter Nramp3 (550 aa).

Positions 1–26 (MSGPMQRSSQPQFISSVERNNQSNGP) are enriched in polar residues. Positions 1-30 (MSGPMQRSSQPQFISSVERNNQSNGPGTPL) are disordered. Helical transmembrane passes span 50–70 (LFSYIGPGFLVSIAYIDPGNF), 83–103 (ELLWIILIASCAALIIQSLAA), 127–147 (FILWILAELAVVACDIPEVIG), 158–178 (IPVWCGVLITGLSTLMLLLLQ), 185–205 (LEFLIAILVSLIATCFLVELG), 233–253 (ISLLGAMVMPHNLFLHSALVL), 276–296 (AFALTIAFLINISIISVSGAV), 333–353 (LFAVALLASGQSSTITGTYAG), 368–390 (WIRNLLTRSLAILPSLIVSIIGG), 397–417 (LIIIASMILSFELPFALVPLL), 435–455 (ISVITWGIGSFIVVINTYFLI), and 473–493 (VFSGIFGFLGMLIYMAAILYL). Positions 523 to 550 (GEGSLGHLPREDISSMQLPQQRTASDLD) are disordered. The segment covering 536-550 (SSMQLPQQRTASDLD) has biased composition (polar residues).

The protein belongs to the NRAMP (TC 2.A.55) family.

The protein localises to the membrane. Probable metal transporter. This chain is Metal transporter Nramp3 (NRAMP3), found in Oryza sativa subsp. japonica (Rice).